The chain runs to 332 residues: L-lactate dehydrogenase A chain (332 aa).

NAD(+) contacts are provided by residues 29 to 57 and arginine 99; that span reads GAVGMACAISILMKDLADELALVDVIEDK. Positions 106, 138, and 169 each coordinate substrate. Asparagine 138 provides a ligand contact to NAD(+). Histidine 193 (proton acceptor) is an active-site residue. Threonine 248 provides a ligand contact to substrate.

This sequence belongs to the LDH/MDH superfamily. LDH family. As to quaternary structure, homotetramer.

It localises to the cytoplasm. It carries out the reaction (S)-lactate + NAD(+) = pyruvate + NADH + H(+). Its pathway is fermentation; pyruvate fermentation to lactate; (S)-lactate from pyruvate: step 1/1. Its function is as follows. Interconverts simultaneously and stereospecifically pyruvate and lactate with concomitant interconversion of NADH and NAD(+). The chain is L-lactate dehydrogenase A chain (LDHA) from Sceloporus woodi (Florida scrub lizard).